A 243-amino-acid chain; its full sequence is DNA repair protein RecO (243 aa).

It belongs to the RecO family.

In terms of biological role, involved in DNA repair and RecF pathway recombination. In Chlamydia trachomatis serovar L2 (strain ATCC VR-902B / DSM 19102 / 434/Bu), this protein is DNA repair protein RecO.